The chain runs to 98 residues: Large ribosomal subunit protein bL28 (98 aa).

It belongs to the bacterial ribosomal protein bL28 family.

This chain is Large ribosomal subunit protein bL28, found in Thermus thermophilus (strain ATCC BAA-163 / DSM 7039 / HB27).